The sequence spans 619 residues: Glucokinase regulatory protein (619 aa).

SIS domains lie at 90–283 and 319–498; these read VQEV…AESN and TATS…LRGK. 107–109 contacts keto-D-fructose 6-phosphate; sequence CGT. Beta-D-fructose 1-phosphate-binding positions include 109–110, Glu153, 179–181, and Glu347; these read TS and SCG. Keto-D-fructose 6-phosphate is bound by residues 179–183 and Glu347; that span reads SCGLS. An essential for interaction with GCK region spans residues 462-464; that stretch reads ILF. Lys513 lines the keto-D-fructose 6-phosphate pocket. Lys513 is a binding site for beta-D-fructose 1-phosphate.

This sequence belongs to the GCKR family. In terms of assembly, interacts (fructose 6-phosphate bound form) with gck.

It localises to the nucleus. The protein resides in the cytoplasm. The protein localises to the mitochondrion. In terms of biological role, regulates glucokinase (gck) by forming an inactive complex with this enzyme. The affinity of gckr for gck is modulated by fructose metabolites: gckr with bound fructose 6-phosphate has increased affinity for gck, while gckr with bound fructose 1-phosphate has strongly decreased affinity for gck and does not inhibit gck activity. This chain is Glucokinase regulatory protein, found in Xenopus laevis (African clawed frog).